A 1202-amino-acid chain; its full sequence is MNFEGLDPGLAEYAPAMHSALDPVLDAHLNPSLLQNVELDPEGVALEALPVQESVHIMEGVYSELHSVVAEVGVPVSVSHFDLHEEMLWVGSHGGHATSFFGPALERYSSFQVNGSDDIRQIQSLENGILFLTKNNLKYMARGGLIIFDYLLDENEDMHSLLLTDSSTLLVGGLQNHIIEIDLNTVQETQKYAVETPGVTIMRQTNRFFFCGHTSGKVSLRDLRTFKVEHEFDAFSGSLSDFDVHGNLLAACGFSSRLTGLACDRFLKVYDLRMMRAITPLQVHVDPAFLRFIPTYTSRLAIISQSGQCQFCEPTGLANPADIFHVNPVGPLLMTFDVSASKQALAFGDSEGCVHLWTDSPEPSFNPYSRETEFALPCLVDSLPPLDWSQDLLPLSLIPVPLTTDTLLSDWPAANSAPAPRRAPPVDAEILRTMKKVGFIGYAPNPRTRLRNQIPYRLKESDSEFDSFSQVTESPVGREEEPHLHMVSKKYRKVTIKYSKLGLEDFDFKHYNKTLFAGLEPHIPNAYCNCMIQVLYFLEPVRCLIQNHLCQKEFCLACELGFLFHMLDLSRGDPCQGNNFLRAFRTIPEASALGLILADSDEASGKGNLARLIQRWNRFILTQLHQDMQELEIPQAYRGAGGSSFCSSGDSVIGQLFSCEMENCSLCRCGSETVRASSTLLFTLSYPDGSKSDKTGKNYDFAQVLKRSICLDQNTQAWCDTCEKYQPTIQTRNIRHLPDILVINCEVNSSKEADFWRMQAEVAFKMAVKKHGGEISKNKEFALADWKELGSPEGVLVCPSIEELKNVWLPFSIRMKMTKNKGLDVCNWTDGDEMQWGPARAEEEHGVYVYDLMATVVHILDSRTGGSLVAHIKVGETYHQRKEGVTHQQWYLFNDFLIEPIDKHEAVQFDMNWKVPAILYYVKRNLNSRYNLNIKNPIEASVLLAEASLARKQRKTHTTFIPLMLNEMPQIGDLVGLDAEFVTLNEEEAELRSDGTKSTIKPSQMSVARITCVRGQGPNEGIPFIDDYISTQEQVVDYLTQYSGIKPGDLDAKISSKHLTTLKSTYLKLRFLIDIGVKFVGHGLQKDFRVINLMVPKDQVLDTVYLFHMPRKRMISLRFLAWYFLDLKIQGETHDSIEDARTALQLYRKYLELSKNGTEPESFHKVLKGLYEKGRKMDWKVPEPEGQTSPKNAAVFSSVLAL.

WD repeat units lie at residues 153–193, 195–231, 244–280, and 328–367; these read DENE…QKYA, ETPG…VEHE, VHGN…AITP, and PVGP…SFNP. Positions 368–485 are linker; the sequence is YSRETEFALP…VGREEEPHLH (118 aa). The 439-residue stretch at 486 to 924 folds into the USP domain; it reads MVSKKYRKVT…VPAILYYVKR (439 aa). Position 791 is a phosphoserine (Ser791). In terms of domain architecture, Exonuclease spans 975–1147; sequence VGLDAEFVTL…EDARTALQLY (173 aa). 4 residues coordinate a divalent metal cation: Asp978, Glu980, Asp1087, and Asp1139. The residue at position 1189 (Ser1189) is a Phosphoserine.

The protein belongs to the peptidase C19 family. PAN2 subfamily. As to quaternary structure, forms a heterotrimer with an asymmetric homodimer of the regulatory subunit PAN3 to form the poly(A)-nuclease (PAN) deadenylation complex. Interacts with PAN3 isoform 1/Pan3L and isoform 3/Pan3S. Interacts with ZFP36. A divalent metal cation is required as a cofactor.

It localises to the cytoplasm. It is found in the P-body. Its subcellular location is the nucleus. The enzyme catalyses Exonucleolytic cleavage of poly(A) to 5'-AMP.. With respect to regulation, positively regulated by the regulatory subunit PAN3. Functionally, catalytic subunit of the poly(A)-nuclease (PAN) deadenylation complex, one of two cytoplasmic mRNA deadenylases involved in general and miRNA-mediated mRNA turnover. PAN specifically shortens poly(A) tails of RNA and the activity is stimulated by poly(A)-binding protein (PABP). PAN deadenylation is followed by rapid degradation of the shortened mRNA tails by the CCR4-NOT complex. Deadenylated mRNAs are then degraded by two alternative mechanisms, namely exosome-mediated 3'-5' exonucleolytic degradation, or deadenylation-dependent mRNA decaping and subsequent 5'-3' exonucleolytic degradation by XRN1. Also acts as an important regulator of the HIF1A-mediated hypoxic response. Required for HIF1A mRNA stability independent of poly(A) tail length regulation. This is PAN2-PAN3 deadenylation complex catalytic subunit PAN2 from Homo sapiens (Human).